The following is a 258-amino-acid chain: Type III pantothenate kinase (258 aa).

ATP is bound at residue 6-13; it reads DVGNTNIV. Substrate contacts are provided by residues Tyr100 and 107–110; that span reads GADR. Asp109 (proton acceptor) is an active-site residue. Asp129 serves as a coordination point for K(+). Thr132 contacts ATP. Thr184 contacts substrate.

It belongs to the type III pantothenate kinase family. In terms of assembly, homodimer. The cofactor is NH4(+). K(+) is required as a cofactor.

The protein localises to the cytoplasm. The catalysed reaction is (R)-pantothenate + ATP = (R)-4'-phosphopantothenate + ADP + H(+). Its pathway is cofactor biosynthesis; coenzyme A biosynthesis; CoA from (R)-pantothenate: step 1/5. Catalyzes the phosphorylation of pantothenate (Pan), the first step in CoA biosynthesis. In Clostridium botulinum (strain Loch Maree / Type A3), this protein is Type III pantothenate kinase.